The sequence spans 117 residues: Transcription elongation factor SPT4-B (117 aa).

Positions 1–40 are interaction with SUPT5H; it reads MALETVPKDLRHLRACLLCSLVKTIDQFEYDGCDNCDAYL. The C4-type zinc-finger motif lies at 16–36; sequence CLLCSLVKTIDQFEYDGCDNC.

This sequence belongs to the SPT4 family. Interacts with SUPT5H to form DSIF. DSIF interacts with the positive transcription elongation factor b complex (P-TEFb complex), which is composed of CDK9 and cyclin-T (CCNT1 or CCNT2). DSIF interacts with RNA polymerase II, and this interaction is reduced by phosphorylation of the C-terminal domain (CTD) of POLR2A by P-TEFb. DSIF also interacts with the NELF complex, which is composed of WHSC2/NELFA, COBRA1/NELFB, TH1L/NELFD and RDBP/NELFE, and this interaction occurs following prior binding of DSIF to RNA polymerase II. DSIF also interacts with HRMT1L2/PRMT1, HTATSF1/TATSF1, RNGTT/CAP1A, SKB1/PRMT5, SUPT6H, and can interact with PIN1. In terms of processing, ubiquitinated by Ubr5 when not assembled in the DSIF complex, leading to its degradation: Ubr5 recognizes and binds a degron that is not accessible when Supt4h1b is part of the DSIF complex. Expressed in brain, heart and liver.

The protein localises to the nucleus. Component of the DRB sensitivity-inducing factor complex (DSIF complex), which regulates mRNA processing and transcription elongation by RNA polymerase II. DSIF positively regulates mRNA capping by stimulating the mRNA guanylyltransferase activity of RNGTT/CAP1A. DSIF also acts cooperatively with the negative elongation factor complex (NELF complex) to enhance transcriptional pausing at sites proximal to the promoter. Transcriptional pausing may facilitate the assembly of an elongation competent RNA polymerase II complex. DSIF and NELF promote pausing by inhibition of the transcription elongation factor TFIIS/S-II. TFIIS/S-II binds to RNA polymerase II at transcription pause sites and stimulates the weak intrinsic nuclease activity of the enzyme. Cleavage of blocked transcripts by RNA polymerase II promotes the resumption of transcription from the new 3' terminus and may allow repeated attempts at transcription through natural pause sites. The sequence is that of Transcription elongation factor SPT4-B (Supt4h1b) from Mus musculus (Mouse).